Reading from the N-terminus, the 485-residue chain is N-succinylglutamate 5-semialdehyde dehydrogenase (485 aa).

220-225 (GSANTG) is a binding site for NAD(+). Catalysis depends on residues glutamate 243 and cysteine 278.

The protein belongs to the aldehyde dehydrogenase family. AstD subfamily.

The catalysed reaction is N-succinyl-L-glutamate 5-semialdehyde + NAD(+) + H2O = N-succinyl-L-glutamate + NADH + 2 H(+). Its pathway is amino-acid degradation; L-arginine degradation via AST pathway; L-glutamate and succinate from L-arginine: step 4/5. Its function is as follows. Catalyzes the NAD-dependent reduction of succinylglutamate semialdehyde into succinylglutamate. This Vibrio vulnificus (strain YJ016) protein is N-succinylglutamate 5-semialdehyde dehydrogenase.